A 371-amino-acid chain; its full sequence is Ribosomal RNA small subunit methyltransferase H (371 aa).

S-adenosyl-L-methionine-binding positions include Gly-43 to His-45, Asp-62, Leu-96, Asp-110, and Gln-117. The disordered stretch occupies residues Ala-315–Asp-371. Over residues Thr-360 to Asp-371 the composition is skewed to acidic residues.

Belongs to the methyltransferase superfamily. RsmH family.

It is found in the cytoplasm. It catalyses the reaction cytidine(1402) in 16S rRNA + S-adenosyl-L-methionine = N(4)-methylcytidine(1402) in 16S rRNA + S-adenosyl-L-homocysteine + H(+). In terms of biological role, specifically methylates the N4 position of cytidine in position 1402 (C1402) of 16S rRNA. This is Ribosomal RNA small subunit methyltransferase H from Salinispora tropica (strain ATCC BAA-916 / DSM 44818 / JCM 13857 / NBRC 105044 / CNB-440).